Here is a 137-residue protein sequence, read N- to C-terminus: Ig heavy chain V region MOPC 315 (137 aa).

The signal sequence occupies residues 1-18; that stretch reads MKVLSLLYLLTAIPGIMS. Positions 19–48 are framework-1; the sequence is DVQLQESGPGLVKPSQSLSLTCSVTGYSIT. Cys40 and Cys114 are disulfide-bonded. The segment at 49–54 is complementarity-determining-1; the sequence is SGYFWN. The framework-2 stretch occupies residues 55-68; the sequence is WIRQFPGNKLEWLG. Positions 69–84 are complementarity-determining-2; it reads FIKYDGSNGYNPSLKN. Residues 85–116 are framework-3; it reads RVSITRDTSENQFFLKLNSVTTEDTATYYCAG. A complementarity-determining-3 region spans residues 117–126; that stretch reads DNDHLYYFDY. Residues 127-137 form a framework-4 region; that stretch reads WGQGTTLTVSS.

The protein is Ig heavy chain V region MOPC 315 of Mus musculus (Mouse).